A 249-amino-acid chain; its full sequence is 2,3-bisphosphoglycerate-dependent phosphoglycerate mutase (249 aa).

Substrate is bound by residues 8–15 (RHGQSVWN), 21–22 (TG), Arg-60, 87–90 (ERHY), Lys-98, 114–115 (RR), and 183–184 (GN). His-9 (tele-phosphohistidine intermediate) is an active-site residue. Catalysis depends on Glu-87, which acts as the Proton donor/acceptor.

This sequence belongs to the phosphoglycerate mutase family. BPG-dependent PGAM subfamily. As to quaternary structure, homodimer.

It catalyses the reaction (2R)-2-phosphoglycerate = (2R)-3-phosphoglycerate. Its pathway is carbohydrate degradation; glycolysis; pyruvate from D-glyceraldehyde 3-phosphate: step 3/5. Functionally, catalyzes the interconversion of 2-phosphoglycerate and 3-phosphoglycerate. The protein is 2,3-bisphosphoglycerate-dependent phosphoglycerate mutase of Solidesulfovibrio magneticus (strain ATCC 700980 / DSM 13731 / RS-1) (Desulfovibrio magneticus).